A 432-amino-acid polypeptide reads, in one-letter code: Repulsive guidance molecule A (432 aa).

The first 29 residues, 1 to 29, serve as a signal peptide directing secretion; the sequence is MGRGAGSTALGLFQILPVFLCIFPPVTSP. A propeptide spans 30–149 (removed in mature form); sequence CKILKCNSEF…NYTHCGLFGD (120 aa). An N-linked (GlcNAc...) asparagine glycan is attached at N96. The interval 99-122 is disordered; the sequence is KDGPTSQPRLRTLPPGDSQERSDS. Disulfide bonds link C126–C207 and C144–C296. N-linked (GlcNAc...) asparagine glycosylation is present at N140. Residue N404 is the site of GPI-anchor amidated asparagine attachment. The propeptide at 405–432 is removed in mature form; the sequence is AAPSEHPWALPALWVALLSLSQCWLGLL.

This sequence belongs to the repulsive guidance molecule (RGM) family. Autocatalytically cleaved at low pH; the two chains remain linked via two disulfide bonds.

It localises to the cell membrane. Acts as an axon-specific repulsive guidance molecule in the retinotectal system. Repulsive for a subset of axons of the temporal half of the retina. Provides thus positional information for the temporal axons invading the optic tectum in the stratum opticum. This is Repulsive guidance molecule A (RGMA) from Gallus gallus (Chicken).